The sequence spans 244 residues: Transforming protein v-Fos/v-Fox (244 aa).

Positions 1–236 are transforming protein v-Fos; that stretch reads DSLSYYHSPA…LFPASSGHSG (236 aa). A bZIP domain is found at 113 to 176; it reads EVKRRIRRER…EKLEFILAAH (64 aa). The segment at 115 to 135 is basic motif; the sequence is KRRIRRERNKMAAAKCRNRRR. The tract at residues 141 to 169 is leucine-zipper; the sequence is LQAETDQLEDEKSALQTEIANLLKEKEKL. Residues 237–244 form a transforming protein v-Fox region; that stretch reads FISMAGWQ.

The protein belongs to the bZIP family. Fos subfamily.

It is found in the host nucleus. The chain is Transforming protein v-Fos/v-Fox (FOS-FOX) from Mus musculus (Mouse).